A 134-amino-acid chain; its full sequence is MNQRLQRLADQIQRELAVLIRDAVNDPRLTGFVTISSVKVSPDLGYADVYVTIMEPELNDAMTMSNHEESIKVLNKAAGFLRTELSHSLKTRTTPRLRFHYDEVTARGNYMMDLISKAVIKTEENESDEQENEE.

The protein belongs to the RbfA family. In terms of assembly, monomer. Binds 30S ribosomal subunits, but not 50S ribosomal subunits or 70S ribosomes.

It is found in the cytoplasm. Functionally, one of several proteins that assist in the late maturation steps of the functional core of the 30S ribosomal subunit. Associates with free 30S ribosomal subunits (but not with 30S subunits that are part of 70S ribosomes or polysomes). Required for efficient processing of 16S rRNA. May interact with the 5'-terminal helix region of 16S rRNA. This is Ribosome-binding factor A from Psychrobacter arcticus (strain DSM 17307 / VKM B-2377 / 273-4).